A 404-amino-acid chain; its full sequence is MQDALAVILAGGMGSRLSPLTDDRAKPAVPFGGKYRIIDFTLTNCLNSGLRKILVLTQYKSHSLQKHLRDGWSIFNPELGEYITAVPPQMRKGGAWYEGTADAIYHNLWLLSRNDAKYVVVLSGDHIYRMDYAAMLEEHKEKGAKLTVACMDVPVKDASAFGVMGIAENGLVKSFVEKPENPPTLPDDNAKSLASMGIYIFDMDVLKEALTEDAKLETSSHDFGNDIIPKLIDTESVYAYKFCGSKGRVDKDCYWRDVGTIDSFYEANMDLLEPVPPMNLYQSNWAIRTYEPQFPPARTVSSATGNEGIFINSIIATGVINSGGSVQHSIISSNVRIQDSATVVDSIIFDDVEVGEGSQLVNCIVDKHVRIPPNTQIGINKVEDAKRFKISEKGIVVIPESYQF.

Alpha-D-glucose 1-phosphate is bound by residues Y97, G162, 177-178 (EK), and S195.

Belongs to the bacterial/plant glucose-1-phosphate adenylyltransferase family. As to quaternary structure, homotetramer.

The enzyme catalyses alpha-D-glucose 1-phosphate + ATP + H(+) = ADP-alpha-D-glucose + diphosphate. The protein operates within glycan biosynthesis; glycogen biosynthesis. Its function is as follows. Involved in the biosynthesis of ADP-glucose, a building block required for the elongation reactions to produce glycogen. Catalyzes the reaction between ATP and alpha-D-glucose 1-phosphate (G1P) to produce pyrophosphate and ADP-Glc. The sequence is that of Glucose-1-phosphate adenylyltransferase 2 from Vibrio parahaemolyticus serotype O3:K6 (strain RIMD 2210633).